The primary structure comprises 639 residues: Testicular spindle-associated protein SHCBP1L (639 aa).

2 disordered regions span residues 1–25 and 48–75; these read MESD…EQTV and VASP…ETCD. Serine 3 carries the O-acetylserine modification. Phosphoserine occurs at positions 8, 19, and 50. The span at 54–63 shows a compositional bias: basic residues; sequence VKGKAARRRL. The stretch at 285 to 312 forms a coiled coil; the sequence is IAQRFKKTLEKYKNKRVELIEYQSNIKE. 4 PbH1 repeats span residues 479 to 500, 501 to 523, 524 to 557, and 560 to 582; these read SGHL…CVLT, GASL…ELYP, GSIA…NMKV, and APKL…SILQ. Residue lysine 556 is modified to N6-acetyllysine. N6-acetyllysine is present on lysine 631.

In terms of assembly, interacts with HSPA2; this interaction may promote the recruitment of HSPA2 to the spindle. As to expression, expressed in pachytene spermatocytes and elongating spermatids inside the seminiferous tubules. Not detected in ovary (at protein level). Testis-specific.

The protein localises to the cytoplasm. It localises to the cytoskeleton. It is found in the spindle. Testis-specific spindle-associated factor that plays a role in spermatogenesis. In association with HSPA2, participates in the maintenance of spindle integrity during meiosis in male germ cells. The sequence is that of Testicular spindle-associated protein SHCBP1L from Mus musculus (Mouse).